An 874-amino-acid chain; its full sequence is MSIPSILRKETLKKKDKNIDLQENNINDLVVSASRVIAPLWPISTFAAHHPWMGLEKQSFEQVANWLKEARNVDIYPSASMIHSAKAKGEIEESFLQIALSRWLDSQSFHMPRETAERFCQEALKLERLPSSLLSSPELNKLAEEINYVNTGSMKDSSMQPISSLIENQNGDNLSDILNYHIIKWCKLYLDDAGASWAMPNREKGFYRAWQHLITFDPSLSKTERKVLKDWPEDALIALTKALSELGISESNMQAYLEGHLLSLPGWAGMIRWRSQQSIEEQELLIEYLAVRLSMELAIVKPYLPLKNQKVEKKVSIVPLIASWIYWGDISIEKWLQMSAAEQSELLAFAYRFDENTRKKLWLEAWEQTHAEQLREKIASKQRATHDKKRVVAQLAFCIDVRSEPFRRHLEKLGPFETFGIAGFFGLPIATTELGSNDSHPSLPVILKPKHQIKELTDENECKSYEQRKMVGSSVRYTFKTMKQNVLTSMLLPEVSGPLLGLQMVTRSFVPRRVGGFIRNLRKNMLQKPDTTFSLNHVHDTNCEIPIGFTKEEKVNYVRQALKMVGLTEGFAPLVVMCGHSSQSTNNPYAAALECGACGGAAGGFNARVFATLCNLPEVREALSAEGIKIPDDTIFAAAEHKTTVDELEWIYVPELSETAQEAFDCIEAIMPNVSQHANRERLMQLPHFKTKIKNPSKEAHRFAEDWSEIRPEWGLARNASFIIGQRELTRDCDLEGRAFLHNYDWKQDESGDILANIIAGPGTVAQWINLQYYASTVAPHYYGSGNKTTQTVTAGLGVMQGNASDLLPGLPWQSVMQSDRETYHSPLRLLIVIQAPTKYIERLLNNNFTFREKVQNKWVRLASVDPEGRWKNW.

Positions 398, 400, 580, and 595 each coordinate Zn(2+).

Belongs to the inorganic carbon transporter (TC 9.A.2) DabA family. As to quaternary structure, forms a complex with DabB. It depends on Zn(2+) as a cofactor.

The protein localises to the cell membrane. In terms of biological role, part of an energy-coupled inorganic carbon pump. In Bacillus thuringiensis subsp. konkukian (strain 97-27), this protein is Probable inorganic carbon transporter subunit DabA.